Consider the following 156-residue polypeptide: Peptidyl-prolyl cis-trans isomerase H (156 aa).

The region spanning 1–155 (TPAGRLKCEL…MAVRITQCGE (155 aa)) is the PPIase cyclophilin-type domain.

Belongs to the cyclophilin-type PPIase family. PPIase H subfamily.

The protein resides in the nucleus. It carries out the reaction [protein]-peptidylproline (omega=180) = [protein]-peptidylproline (omega=0). In terms of biological role, PPIases accelerate the folding of proteins. It catalyzes the cis-trans isomerization of proline imidic peptide bonds in oligopeptides. This is Peptidyl-prolyl cis-trans isomerase H (CYP3) from Mycosarcoma maydis (Corn smut fungus).